Here is a 502-residue protein sequence, read N- to C-terminus: Maturase K (502 aa).

It belongs to the intron maturase 2 family. MatK subfamily.

The protein resides in the plastid. It localises to the chloroplast. Functionally, usually encoded in the trnK tRNA gene intron. Probably assists in splicing its own and other chloroplast group II introns. This Vitis vinifera (Grape) protein is Maturase K.